We begin with the raw amino-acid sequence, 163 residues long: Nucleotide-binding protein MS1759 (163 aa).

The protein belongs to the YajQ family.

In terms of biological role, nucleotide-binding protein. The protein is Nucleotide-binding protein MS1759 of Mannheimia succiniciproducens (strain KCTC 0769BP / MBEL55E).